We begin with the raw amino-acid sequence, 292 residues long: tRNA-splicing endonuclease (292 aa).

Active-site residues include Tyr231, His238, and Lys267.

The protein belongs to the tRNA-intron endonuclease family. Archaeal long subfamily. In terms of assembly, homodimer.

It carries out the reaction pretRNA = a 3'-half-tRNA molecule with a 5'-OH end + a 5'-half-tRNA molecule with a 2',3'-cyclic phosphate end + an intron with a 2',3'-cyclic phosphate and a 5'-hydroxyl terminus.. Functionally, endonuclease that removes tRNA introns. Cleaves pre-tRNA at the 5'- and 3'-splice sites to release the intron. The products are an intron and two tRNA half-molecules bearing 2',3' cyclic phosphate and 5'-OH termini. Recognizes a pseudosymmetric substrate in which 2 bulged loops of 3 bases are separated by a stem of 4 bp. In Thermoplasma volcanium (strain ATCC 51530 / DSM 4299 / JCM 9571 / NBRC 15438 / GSS1), this protein is tRNA-splicing endonuclease.